The following is a 574-amino-acid chain: Sulfate adenylyltransferase (574 aa).

An N-terminal region spans residues 1-170 (MANPPHGGVL…VEAIDRLEHY (170 aa)). The tract at residues 171–395 (DYVGLRYTPA…LRESHPPRNQ (225 aa)) is catalytic. A sulfate-binding site is contributed by Gln-198. ATP contacts are provided by residues 198–201 (QTRN) and 292–295 (GRDH). Catalysis depends on residues Thr-199, Arg-200, and Asn-201. Arg-200 is a binding site for sulfate. Ala-296 contacts sulfate. Met-334 serves as a coordination point for ATP. The tract at residues 396-574 (QGFTVFLTGY…LESQGLLTQL (179 aa)) is allosteric regulation domain; adenylyl-sulfate kinase-like. 3'-phosphoadenylyl sulfate-binding positions include 435-438 (ETVR), Arg-452, 478-479 (IA), and Arg-516.

It in the N-terminal section; belongs to the sulfate adenylyltransferase family. In the C-terminal section; belongs to the APS kinase family. Homohexamer. Dimer of trimers.

Its subcellular location is the cytoplasm. The enzyme catalyses sulfate + ATP + H(+) = adenosine 5'-phosphosulfate + diphosphate. It functions in the pathway sulfur metabolism; hydrogen sulfide biosynthesis; sulfite from sulfate: step 1/3. Its activity is regulated as follows. Allosterically inhibited by 3'-phosphoadenosine 5'-phosphosulfate (PAPS). In terms of biological role, catalyzes the first intracellular reaction of sulfate assimilation, forming adenosine-5'-phosphosulfate (APS) from inorganic sulfate and ATP. Plays an important role in sulfate activation as a component of the biosynthesis pathway of sulfur-containing amino acids. This Phaeosphaeria nodorum (strain SN15 / ATCC MYA-4574 / FGSC 10173) (Glume blotch fungus) protein is Sulfate adenylyltransferase.